A 798-amino-acid chain; its full sequence is Phenylalanine--tRNA ligase beta subunit (798 aa).

Residues 39–147 form the tRNA-binding domain; it reads AARLAGFTLA…PSGEVGERFI (109 aa). The B5 domain occupies 404 to 475; it reads DHSRAYKLDA…RIASLTKLVG (72 aa). Mg(2+) is bound by residues Asp-453, Asp-459, Glu-462, and Glu-463. An FDX-ACB domain is found at 704-797; it reads RDLQAVERDF…VAKATGGTLR (94 aa).

It belongs to the phenylalanyl-tRNA synthetase beta subunit family. Type 1 subfamily. Tetramer of two alpha and two beta subunits. Requires Mg(2+) as cofactor.

Its subcellular location is the cytoplasm. The catalysed reaction is tRNA(Phe) + L-phenylalanine + ATP = L-phenylalanyl-tRNA(Phe) + AMP + diphosphate + H(+). The chain is Phenylalanine--tRNA ligase beta subunit from Ruegeria pomeroyi (strain ATCC 700808 / DSM 15171 / DSS-3) (Silicibacter pomeroyi).